Reading from the N-terminus, the 150-residue chain is D-aminoacyl-tRNA deacylase (150 aa).

The short motif at 138-139 (GP) is the Gly-cisPro motif, important for rejection of L-amino acids element.

It belongs to the DTD family. As to quaternary structure, homodimer.

The protein resides in the cytoplasm. It catalyses the reaction glycyl-tRNA(Ala) + H2O = tRNA(Ala) + glycine + H(+). It carries out the reaction a D-aminoacyl-tRNA + H2O = a tRNA + a D-alpha-amino acid + H(+). Its function is as follows. An aminoacyl-tRNA editing enzyme that deacylates mischarged D-aminoacyl-tRNAs. Also deacylates mischarged glycyl-tRNA(Ala), protecting cells against glycine mischarging by AlaRS. Acts via tRNA-based rather than protein-based catalysis; rejects L-amino acids rather than detecting D-amino acids in the active site. By recycling D-aminoacyl-tRNA to D-amino acids and free tRNA molecules, this enzyme counteracts the toxicity associated with the formation of D-aminoacyl-tRNA entities in vivo and helps enforce protein L-homochirality. In Flavobacterium johnsoniae (strain ATCC 17061 / DSM 2064 / JCM 8514 / BCRC 14874 / CCUG 350202 / NBRC 14942 / NCIMB 11054 / UW101) (Cytophaga johnsonae), this protein is D-aminoacyl-tRNA deacylase.